Here is a 165-residue protein sequence, read N- to C-terminus: Cyclic pyranopterin monophosphate synthase (165 aa).

Substrate is bound by residues 76–78 and 114–115; these read LCH and ME. Aspartate 129 is a catalytic residue.

This sequence belongs to the MoaC family. In terms of assembly, homohexamer; trimer of dimers.

The catalysed reaction is (8S)-3',8-cyclo-7,8-dihydroguanosine 5'-triphosphate = cyclic pyranopterin phosphate + diphosphate. Its pathway is cofactor biosynthesis; molybdopterin biosynthesis. Its function is as follows. Catalyzes the conversion of (8S)-3',8-cyclo-7,8-dihydroguanosine 5'-triphosphate to cyclic pyranopterin monophosphate (cPMP). This Brucella melitensis biotype 2 (strain ATCC 23457) protein is Cyclic pyranopterin monophosphate synthase.